Consider the following 287-residue polypeptide: Rhomboid-like protein 18 (287 aa).

A run of 6 helical transmembrane segments spans residues 10–30 (NAPV…FFGI), 53–73 (LIIS…LYLL), 90–110 (VFIF…LSLT), 117–137 (LLTS…FLDI), 145–165 (VLGV…QLLL), and 172–192 (IFTG…IFGI). Residues 244–284 (EPSEEAIATLVSMGFDQNAARQALVHARNDVNAATNILLEA) enclose the UBA domain.

The protein belongs to the peptidase S54 family.

The protein resides in the membrane. In terms of biological role, probable rhomboid-type serine protease that catalyzes intramembrane proteolysis. In Arabidopsis thaliana (Mouse-ear cress), this protein is Rhomboid-like protein 18.